The sequence spans 612 residues: Dihydroxy-acid dehydratase (612 aa).

Asp-81 contacts Mg(2+). Residue Cys-122 participates in [2Fe-2S] cluster binding. Positions 123 and 124 each coordinate Mg(2+). Position 124 is an N6-carboxylysine (Lys-124). Cys-195 provides a ligand contact to [2Fe-2S] cluster. Residue Glu-491 participates in Mg(2+) binding. Ser-517 functions as the Proton acceptor in the catalytic mechanism.

Belongs to the IlvD/Edd family. As to quaternary structure, homodimer. Requires [2Fe-2S] cluster as cofactor. Mg(2+) is required as a cofactor.

The enzyme catalyses (2R)-2,3-dihydroxy-3-methylbutanoate = 3-methyl-2-oxobutanoate + H2O. It carries out the reaction (2R,3R)-2,3-dihydroxy-3-methylpentanoate = (S)-3-methyl-2-oxopentanoate + H2O. Its pathway is amino-acid biosynthesis; L-isoleucine biosynthesis; L-isoleucine from 2-oxobutanoate: step 3/4. It functions in the pathway amino-acid biosynthesis; L-valine biosynthesis; L-valine from pyruvate: step 3/4. Its function is as follows. Functions in the biosynthesis of branched-chain amino acids. Catalyzes the dehydration of (2R,3R)-2,3-dihydroxy-3-methylpentanoate (2,3-dihydroxy-3-methylvalerate) into 2-oxo-3-methylpentanoate (2-oxo-3-methylvalerate) and of (2R)-2,3-dihydroxy-3-methylbutanoate (2,3-dihydroxyisovalerate) into 2-oxo-3-methylbutanoate (2-oxoisovalerate), the penultimate precursor to L-isoleucine and L-valine, respectively. The polypeptide is Dihydroxy-acid dehydratase (Bartonella henselae (strain ATCC 49882 / DSM 28221 / CCUG 30454 / Houston 1) (Rochalimaea henselae)).